A 97-amino-acid polypeptide reads, in one-letter code: uncharacterized protein (97 aa).

Residues 38 to 97 (TSPPDWNKFSGKVSINEPTTSKSKSKSTSTSTSTSTSTSTSTSTSSSTSSTSSTTSSINK) form a disordered region. Over residues 56–97 (TTSKSKSKSTSTSTSTSTSTSTSTSTSSSTSSTSSTTSSINK) the composition is skewed to low complexity.

This is an uncharacterized protein from Dictyostelium discoideum (Social amoeba).